A 445-amino-acid chain; its full sequence is Phosphoglucosamine mutase (445 aa).

Ser-102 (phosphoserine intermediate) is an active-site residue. Residues Ser-102, Asp-241, Asp-243, and Asp-245 each contribute to the Mg(2+) site. Ser-102 is modified (phosphoserine).

Belongs to the phosphohexose mutase family. It depends on Mg(2+) as a cofactor. Activated by phosphorylation.

The catalysed reaction is alpha-D-glucosamine 1-phosphate = D-glucosamine 6-phosphate. In terms of biological role, catalyzes the conversion of glucosamine-6-phosphate to glucosamine-1-phosphate. In Escherichia fergusonii (strain ATCC 35469 / DSM 13698 / CCUG 18766 / IAM 14443 / JCM 21226 / LMG 7866 / NBRC 102419 / NCTC 12128 / CDC 0568-73), this protein is Phosphoglucosamine mutase.